A 199-amino-acid polypeptide reads, in one-letter code: Recombination protein RecR (199 aa).

The segment at C58–C73 adopts a C4-type zinc-finger fold. In terms of domain architecture, Toprim spans Q81 to P175.

This sequence belongs to the RecR family.

In terms of biological role, may play a role in DNA repair. It seems to be involved in an RecBC-independent recombinational process of DNA repair. It may act with RecF and RecO. This Synechococcus elongatus (strain ATCC 33912 / PCC 7942 / FACHB-805) (Anacystis nidulans R2) protein is Recombination protein RecR.